An 85-amino-acid polypeptide reads, in one-letter code: Omega-conotoxin-like Am6.5 (85 aa).

The N-terminal stretch at 1 to 19 is a signal peptide; the sequence is MCILIVAVLFLTAWTFVMA. A propeptide spanning residues 20–53 is cleaved from the precursor; it reads DDPRDEPDTVVRGGKLFSRARDEMNPAASKLNER. Disulfide bonds link C55/C73, C62/C77, and C72/C81. Q84 is modified (glutamine amide).

The protein belongs to the conotoxin O1 family. Is not hydroxylated. Expressed by the venom duct.

It localises to the secreted. Functionally, omega-conotoxins act at presynaptic membranes, they bind and block voltage-gated calcium channels (Cav). The polypeptide is Omega-conotoxin-like Am6.5 (Conus amadis (Amadis cone)).